We begin with the raw amino-acid sequence, 237 residues long: Keratin-associated protein 5-5 (237 aa).

Tandem repeats lie at residues 62 to 65 (CCVP), 68 to 71 (CCKP), 74 to 77 (CCVP), 159 to 162 (CCKP), 178 to 181 (CCKP), 188 to 191 (CCKP), 198 to 201 (CCKP), and 227 to 230 (CCVP). An 8 X 4 AA repeats of C-C-X-P region spans residues 62 to 230 (CCVPVCCCKP…CCCQSSCCVP (169 aa)).

The protein belongs to the KRTAP type 5 family. Interacts with hair keratins. In terms of tissue distribution, restricted to hair root, not detected in any other tissues.

Its function is as follows. In the hair cortex, hair keratin intermediate filaments are embedded in an interfilamentous matrix, consisting of hair keratin-associated protein (KRTAP), which are essential for the formation of a rigid and resistant hair shaft through their extensive disulfide bond cross-linking with abundant cysteine residues of hair keratins. The matrix proteins include the high-sulfur and high-glycine-tyrosine keratins. This chain is Keratin-associated protein 5-5 (KRTAP5-5), found in Homo sapiens (Human).